Reading from the N-terminus, the 182-residue chain is MISSTMAEKVVDPYAEALIALGSGQGLLDTFAADMRFIAEVLRATPELGQFLANPVIKAEAKKNLLQQVFADQIHPLLLNALKLLTDRRRIMFLGTVCRRFLDLQRKLQNIVLAEVTTAIPLTEAQQQSIRERVMDFTQASGVELQATQDPELLGGVVIKIGSQVIDLSLRGQLRRLALQLA.

The protein belongs to the ATPase delta chain family. In terms of assembly, F-type ATPases have 2 components, F(1) - the catalytic core - and F(0) - the membrane proton channel. F(1) has five subunits: alpha(3), beta(3), gamma(1), delta(1), epsilon(1). CF(0) has four main subunits: a(1), b(1), b'(1) and c(10-14). The alpha and beta chains form an alternating ring which encloses part of the gamma chain. F(1) is attached to F(0) by a central stalk formed by the gamma and epsilon chains, while a peripheral stalk is formed by the delta, b and b' chains.

Its subcellular location is the cellular thylakoid membrane. Its function is as follows. F(1)F(0) ATP synthase produces ATP from ADP in the presence of a proton or sodium gradient. F-type ATPases consist of two structural domains, F(1) containing the extramembraneous catalytic core and F(0) containing the membrane proton channel, linked together by a central stalk and a peripheral stalk. During catalysis, ATP synthesis in the catalytic domain of F(1) is coupled via a rotary mechanism of the central stalk subunits to proton translocation. Functionally, this protein is part of the stalk that links CF(0) to CF(1). It either transmits conformational changes from CF(0) to CF(1) or is implicated in proton conduction. This Synechococcus sp. (strain JA-2-3B'a(2-13)) (Cyanobacteria bacterium Yellowstone B-Prime) protein is ATP synthase subunit delta.